The chain runs to 122 residues: Acidic phospholipase A2 (122 aa).

7 disulfides stabilise this stretch: Cys26–Cys115, Cys28–Cys44, Cys43–Cys95, Cys49–Cys122, Cys50–Cys88, Cys57–Cys81, and Cys75–Cys86. Residues Tyr27, Gly29, and Gly31 each contribute to the Ca(2+) site. The active site involves His47. Asp48 contacts Ca(2+). The active site involves Asp89.

The protein belongs to the phospholipase A2 family. Group II subfamily. D49 sub-subfamily. As to quaternary structure, monomer. It depends on Ca(2+) as a cofactor. In terms of tissue distribution, expressed by the venom gland.

The protein localises to the secreted. The catalysed reaction is a 1,2-diacyl-sn-glycero-3-phosphocholine + H2O = a 1-acyl-sn-glycero-3-phosphocholine + a fatty acid + H(+). Functionally, PLA2 catalyzes the calcium-dependent hydrolysis of the 2-acyl groups in 3-sn-phosphoglycerides. This Gloydius blomhoffii (Mamushi) protein is Acidic phospholipase A2.